The primary structure comprises 287 residues: ATP synthase gamma chain (287 aa).

It belongs to the ATPase gamma chain family. As to quaternary structure, F-type ATPases have 2 components, CF(1) - the catalytic core - and CF(0) - the membrane proton channel. CF(1) has five subunits: alpha(3), beta(3), gamma(1), delta(1), epsilon(1). CF(0) has three main subunits: a, b and c.

Its subcellular location is the cell inner membrane. Produces ATP from ADP in the presence of a proton gradient across the membrane. The gamma chain is believed to be important in regulating ATPase activity and the flow of protons through the CF(0) complex. In Parabacteroides distasonis (strain ATCC 8503 / DSM 20701 / CIP 104284 / JCM 5825 / NCTC 11152), this protein is ATP synthase gamma chain.